The sequence spans 108 residues: Small ribosomal subunit protein bS18c (108 aa).

Basic residues-rich tracts occupy residues 1–19 (MDKS…RRRL) and 97–108 (RARKKKIGLLLN). 2 disordered regions span residues 1-23 (MDKS…PPIG) and 83-108 (QFER…LLLN).

It belongs to the bacterial ribosomal protein bS18 family. In terms of assembly, part of the 30S ribosomal subunit.

It localises to the plastid. Its subcellular location is the chloroplast. The protein is Small ribosomal subunit protein bS18c of Illicium oligandrum (Star anise).